The sequence spans 320 residues: SUN domain-containing protein 3 (320 aa).

At 1–6 (MLTRSW) the chain is on the nuclear side. A helical membrane pass occupies residues 7–29 (KIILSTVFISTFLLVGLLNHQWL). Residues 30–320 (KETEFPQKPR…RVHGIPSDYT (291 aa)) lie on the Perinuclear space side of the membrane. Residues 63 to 102 (KEQQELLKKESQTLENNFREILFLIEQIDVLKALLKDMKD) adopt a coiled-coil conformation. The region spanning 156-317 (GASVIEAGTS…YRFRVHGIPS (162 aa)) is the SUN domain.

As to quaternary structure, self-associates. Interacts with SYNE1 and SPAG4/SUN4. Proposed to form a spermatogenesis-specific LINC complex with SYNE1 during sperm head formation possibly implicating a SUN domain-based heterotrimer with SPAG4/SUN4 associating with SYNE1. Can interact with SYNE3; the interaction is questioned by missing colocalization in spermatids. As to expression, specifically expressed in testis (at protein level).

The protein localises to the membrane. It is found in the nucleus envelope. It localises to the nucleus inner membrane. Functionally, as a probable component of the LINC (LInker of Nucleoskeleton and Cytoskeleton) complex, involved in the connection between the nuclear lamina and the cytoskeleton. The nucleocytoplasmic interactions established by the LINC complex play an important role in the transmission of mechanical forces across the nuclear envelope and in nuclear movement and positioning. May be involved in nuclear remodeling during sperm head formation in spermatogenesis. A probable SUN3:SYNE1 LINC complex may tether spermatid nuclei to posterior cytoskeletal structures such as the manchette. The sequence is that of SUN domain-containing protein 3 (Sun3) from Mus musculus (Mouse).